The primary structure comprises 81 residues: Large ribosomal subunit protein bL28 (81 aa).

It belongs to the bacterial ribosomal protein bL28 family.

This chain is Large ribosomal subunit protein bL28, found in Gloeobacter violaceus (strain ATCC 29082 / PCC 7421).